The sequence spans 187 residues: Resolvase OPG149 (187 aa).

The protein belongs to the RuvC family. Poxviruses-type subfamily. Mg(2+) serves as cofactor.

Plays a role in DNA replication by cleaving viral DNA concatamers to yield unit-length viral genomes. The concatamer junctions contain inverted repeat sequences that can be extruded as cruciforms, yielding Holliday junctions that A22 protein cleaves. The chain is Resolvase OPG149 (OPG149) from Cynomys gunnisoni (Gunnison's prairie dog).